Reading from the N-terminus, the 120-residue chain is uncharacterized protein (120 aa).

N-linked (GlcNAc...) asparagine; by host glycans are attached at residues asparagine 29 and asparagine 68. A helical membrane pass occupies residues 74–94 (IFNGLGFILIVIFIYLLIITL).

It belongs to the asfivirus B117L family.

The protein resides in the host membrane. It is found in the virion. This is an uncharacterized protein from Ornithodoros (relapsing fever ticks).